The chain runs to 20 residues: Alpha-1B-glycoprotein (20 aa).

The disordered stretch occupies residues 1–20 (AVVFDPQPALWAEADTQLEP).

In terms of assembly, interacts with CRISP3. Post-translationally, glycosylated. In terms of tissue distribution, plasma.

Its subcellular location is the secreted. The sequence is that of Alpha-1B-glycoprotein (A1BG) from Equus asinus (Donkey).